The sequence spans 273 residues: SPRY domain-containing SOCS box protein 4 (273 aa).

The B30.2/SPRY domain maps to 34-233 (PARLDQLLDM…MRYINGLDPE (200 aa)). The 40-residue stretch at 234 to 273 (PLPLMDLCRRSIRSALGRQRLRDIGSLPLPQSLKNYLQYQ) folds into the SOCS box domain.

This sequence belongs to the SPSB family. In terms of assembly, component of the probable ECS(SPSB4) E3 ubiquitin-protein ligase complex which contains CUL5, RNF7/RBX2, Elongin BC complex and SPSB4. Interacts with CUL5; RNF7; ELOB and ELOC. Interacts with MET. Interacts (via B30.2/SPRY domain) with PAWR; this interaction occurs in association with the Elongin BC complex. Interacts with NOS2. Interacts with EPHB2.

It localises to the cytoplasm. The protein localises to the cytosol. It functions in the pathway protein modification; protein ubiquitination. Functionally, substrate recognition component of a SCF-like ECS (Elongin BC-CUL2/5-SOCS-box protein) E3 ubiquitin-protein ligase complex which mediates the ubiquitination and subsequent proteasomal degradation of target proteins. Negatively regulates nitric oxide (NO) production and limits cellular toxicity in activated macrophages by mediating the ubiquitination and proteasomal degradation of NOS2. Acts as a bridge which links NOS2 with the ECS E3 ubiquitin ligase complex components ELOC and CUL5. Diminishes EphB2-dependent cell repulsive responses by mediating the ubiquitination and degradation of the EphB2/CTF2. Regulates cellular clock function by mediating ubiquitination and proteasomal degradation of the circadian transcriptional repressor NR1D1. In Mus musculus (Mouse), this protein is SPRY domain-containing SOCS box protein 4 (Spsb4).